The following is a 475-amino-acid chain: ATP synthase subunit beta (475 aa).

ATP is bound at residue 152–159 (GGAGVGKT).

Belongs to the ATPase alpha/beta chains family. In terms of assembly, F-type ATPases have 2 components, CF(1) - the catalytic core - and CF(0) - the membrane proton channel. CF(1) has five subunits: alpha(3), beta(3), gamma(1), delta(1), epsilon(1). CF(0) has three main subunits: a(1), b(2) and c(9-12). The alpha and beta chains form an alternating ring which encloses part of the gamma chain. CF(1) is attached to CF(0) by a central stalk formed by the gamma and epsilon chains, while a peripheral stalk is formed by the delta and b chains.

Its subcellular location is the cell inner membrane. The catalysed reaction is ATP + H2O + 4 H(+)(in) = ADP + phosphate + 5 H(+)(out). Functionally, produces ATP from ADP in the presence of a proton gradient across the membrane. The catalytic sites are hosted primarily by the beta subunits. The chain is ATP synthase subunit beta from Wolbachia sp. subsp. Drosophila simulans (strain wRi).